The chain runs to 104 residues: AVIToxin-VAR1 (104 aa).

The N-terminal stretch at 1–19 (MRSLLCAPLLLLLLSAGES) is a signal peptide. Intrachain disulfides connect Cys-26-Cys-38, Cys-32-Cys-50, Cys-37-Cys-78, Cys-60-Cys-86, and Cys-80-Cys-96.

The protein belongs to the AVIT (prokineticin) family. In terms of tissue distribution, expressed by the venom gland.

Its subcellular location is the secreted. Functionally, potent agonist for both PKR1/PROKR1 and PKR2/PROKR2. Potently contracts gastrointestinal (GI) smooth muscle. This chain is AVIToxin-VAR1, found in Varanus varius (Lace monitor lizard).